We begin with the raw amino-acid sequence, 447 residues long: Glutamyl-tRNA(Gln) amidotransferase subunit A (447 aa).

Residues K50 and S125 each act as charge relay system in the active site. The active-site Acyl-ester intermediate is the S149.

This sequence belongs to the amidase family. GatA subfamily. As to quaternary structure, heterotrimer of A, B and C subunits.

The enzyme catalyses L-glutamyl-tRNA(Gln) + L-glutamine + ATP + H2O = L-glutaminyl-tRNA(Gln) + L-glutamate + ADP + phosphate + H(+). Functionally, allows the formation of correctly charged Gln-tRNA(Gln) through the transamidation of misacylated Glu-tRNA(Gln) in organisms which lack glutaminyl-tRNA synthetase. The reaction takes place in the presence of glutamine and ATP through an activated gamma-phospho-Glu-tRNA(Gln). The polypeptide is Glutamyl-tRNA(Gln) amidotransferase subunit A (Sulfurimonas denitrificans (strain ATCC 33889 / DSM 1251) (Thiomicrospira denitrificans (strain ATCC 33889 / DSM 1251))).